Here is a 381-residue protein sequence, read N- to C-terminus: tRNA-cytidine(32) 2-sulfurtransferase (381 aa).

Residues Ser-101–Ser-106 carry the PP-loop motif motif. [4Fe-4S] cluster-binding residues include Cys-176, Cys-179, and Cys-267.

This sequence belongs to the TtcA family. In terms of assembly, homodimer. It depends on Mg(2+) as a cofactor. The cofactor is [4Fe-4S] cluster.

The protein resides in the cytoplasm. It catalyses the reaction cytidine(32) in tRNA + S-sulfanyl-L-cysteinyl-[cysteine desulfurase] + AH2 + ATP = 2-thiocytidine(32) in tRNA + L-cysteinyl-[cysteine desulfurase] + A + AMP + diphosphate + H(+). Its pathway is tRNA modification. Functionally, catalyzes the ATP-dependent 2-thiolation of cytidine in position 32 of tRNA, to form 2-thiocytidine (s(2)C32). The sulfur atoms are provided by the cysteine/cysteine desulfurase (IscS) system. The chain is tRNA-cytidine(32) 2-sulfurtransferase from Psychrobacter arcticus (strain DSM 17307 / VKM B-2377 / 273-4).